A 146-amino-acid chain; its full sequence is UPF0178 protein BCAH187_A3092 (146 aa).

This sequence belongs to the UPF0178 family.

In Bacillus cereus (strain AH187), this protein is UPF0178 protein BCAH187_A3092.